Consider the following 166-residue polypeptide: Large ribosomal subunit protein uL10 (166 aa).

It belongs to the universal ribosomal protein uL10 family. In terms of assembly, part of the ribosomal stalk of the 50S ribosomal subunit. The N-terminus interacts with L11 and the large rRNA to form the base of the stalk. The C-terminus forms an elongated spine to which L12 dimers bind in a sequential fashion forming a multimeric L10(L12)X complex.

In terms of biological role, forms part of the ribosomal stalk, playing a central role in the interaction of the ribosome with GTP-bound translation factors. The chain is Large ribosomal subunit protein uL10 from Bacillus cereus (strain ATCC 14579 / DSM 31 / CCUG 7414 / JCM 2152 / NBRC 15305 / NCIMB 9373 / NCTC 2599 / NRRL B-3711).